Here is a 915-residue protein sequence, read N- to C-terminus: Protein MEI2-like 1 (915 aa).

The disordered stretch occupies residues 1–90; that stretch reads MPSDIMEQRG…NTTNGSQWES (90 aa). Over residues 16–25 the composition is skewed to basic and acidic residues; it reads HFHEDIHITS. Residues 50–65 are compositionally biased toward polar residues; that stretch reads MPKSSWTSESYQLKPQ. The segment covering 66 to 77 has biased composition (low complexity); it reads SSFSGSHPSGSP. Serine 76 is modified (phosphoserine). Positions 78-89 are enriched in polar residues; sequence NARNTTNGSQWE. 2 RRM domains span residues 217–290 and 302–375; these read RTLL…YSIS and GALL…PTYP. Disordered stretches follow at residues 690–723 and 854–915; these read PGRS…SSSN and LFHT…LKEN. Basic and acidic residues predominate over residues 705–723; the sequence is PNERYRNLSHRRSESSSSN. Polar residues predominate over residues 882 to 898; the sequence is RSSSIDNYNSFSISSVS.

As to expression, expressed in roots, shoots, leaves, flowers and siliques.

In terms of biological role, probable RNA-binding transcriptional activator that plays a role in meiosis and vegetative growth. May be a downstream effector of TOR signaling pathway and recruited by RAPTOR1 for TOR substrate. The polypeptide is Protein MEI2-like 1 (ML1) (Arabidopsis thaliana (Mouse-ear cress)).